We begin with the raw amino-acid sequence, 467 residues long: Probable citrate synthase 1, mitochondrial (467 aa).

Active-site residues include His-303, His-349, and Asp-404.

Belongs to the citrate synthase family. In terms of assembly, homodimer.

It is found in the mitochondrion matrix. The enzyme catalyses oxaloacetate + acetyl-CoA + H2O = citrate + CoA + H(+). The protein operates within carbohydrate metabolism; tricarboxylic acid cycle; isocitrate from oxaloacetate: step 1/2. The chain is Probable citrate synthase 1, mitochondrial from Aedes aegypti (Yellowfever mosquito).